Reading from the N-terminus, the 150-residue chain is 6,7-dimethyl-8-ribityllumazine synthase (150 aa).

5-amino-6-(D-ribitylamino)uracil contacts are provided by residues Phe11, 43-45, and 67-69; these read VYD and AVI. 72 to 73 is a binding site for (2S)-2-hydroxy-3-oxobutyl phosphate; it reads AT. The active-site Proton donor is the His75. Leu100 is a binding site for 5-amino-6-(D-ribitylamino)uracil. Residue Arg115 participates in (2S)-2-hydroxy-3-oxobutyl phosphate binding.

The protein belongs to the DMRL synthase family.

The enzyme catalyses (2S)-2-hydroxy-3-oxobutyl phosphate + 5-amino-6-(D-ribitylamino)uracil = 6,7-dimethyl-8-(1-D-ribityl)lumazine + phosphate + 2 H2O + H(+). Its pathway is cofactor biosynthesis; riboflavin biosynthesis; riboflavin from 2-hydroxy-3-oxobutyl phosphate and 5-amino-6-(D-ribitylamino)uracil: step 1/2. Catalyzes the formation of 6,7-dimethyl-8-ribityllumazine by condensation of 5-amino-6-(D-ribitylamino)uracil with 3,4-dihydroxy-2-butanone 4-phosphate. This is the penultimate step in the biosynthesis of riboflavin. This is 6,7-dimethyl-8-ribityllumazine synthase from Pyrobaculum neutrophilum (strain DSM 2338 / JCM 9278 / NBRC 100436 / V24Sta) (Thermoproteus neutrophilus).